A 480-amino-acid polypeptide reads, in one-letter code: Proline--tRNA ligase (480 aa).

It belongs to the class-II aminoacyl-tRNA synthetase family. ProS type 3 subfamily. As to quaternary structure, homodimer.

Its subcellular location is the cytoplasm. The enzyme catalyses tRNA(Pro) + L-proline + ATP = L-prolyl-tRNA(Pro) + AMP + diphosphate. Its function is as follows. Catalyzes the attachment of proline to tRNA(Pro) in a two-step reaction: proline is first activated by ATP to form Pro-AMP and then transferred to the acceptor end of tRNA(Pro). This is Proline--tRNA ligase from Alkaliphilus oremlandii (strain OhILAs) (Clostridium oremlandii (strain OhILAs)).